The sequence spans 309 residues: Thiamine-monophosphate kinase (309 aa).

Mg(2+) contacts are provided by Asp-25, Thr-39, Ser-40, and Asp-41. Position 48 (Asp-48) interacts with substrate. The Mg(2+) site is built by Asp-69 and Asp-117. Residues 116 to 117 (GD) and Arg-140 contribute to the ATP site. Position 201 (Asp-201) interacts with Mg(2+). Position 203 (Ser-203) interacts with ATP. Residue Asp-204 coordinates Mg(2+). Glu-250 and Trp-298 together coordinate substrate.

This sequence belongs to the thiamine-monophosphate kinase family.

It catalyses the reaction thiamine phosphate + ATP = thiamine diphosphate + ADP. It functions in the pathway cofactor biosynthesis; thiamine diphosphate biosynthesis; thiamine diphosphate from thiamine phosphate: step 1/1. Catalyzes the ATP-dependent phosphorylation of thiamine-monophosphate (TMP) to form thiamine-pyrophosphate (TPP), the active form of vitamin B1. This is Thiamine-monophosphate kinase from Pyrococcus horikoshii (strain ATCC 700860 / DSM 12428 / JCM 9974 / NBRC 100139 / OT-3).